A 101-amino-acid polypeptide reads, in one-letter code: Protein RnfH (101 aa).

This sequence belongs to the UPF0125 (RnfH) family.

This is Protein RnfH from Pseudomonas aeruginosa (strain LESB58).